Consider the following 169-residue polypeptide: EP300-interacting inhibitor of differentiation 1 (169 aa).

The tract at residues 31–50 (GRGARGPAPEEGPMEEEAGP) is disordered. Residues 54-120 (RAQRGLFPEA…AGDALDGGFQ (67 aa)) form an interaction with NR0B2 region. The LXCXE motif signature appears at 150-154 (LGCDE).

As to quaternary structure, interacts via its LXCXE motif with the entire pocket region of RB1. Interacts with EP300, NR0B2 and TRIM27. Expressed in all adult tissues examined and during embryogenesis.

Its subcellular location is the nucleus. The protein localises to the cytoplasm. Interacts with RB1 and EP300 and acts as a repressor of MYOD1 transactivation. Inhibits EP300 and CBP histone acetyltransferase activity. May be involved in coupling cell cycle exit to the transcriptional activation of genes required for cellular differentiation. May act as a candidate coinhibitory factor for NR0B2 that can be directly linked to transcription inhibitory mechanisms. The protein is EP300-interacting inhibitor of differentiation 1 of Mus musculus (Mouse).